Consider the following 213-residue polypeptide: Ephrin-A2 (213 aa).

The first 24 residues, 1–24 (MAPAQRPLLPLLLLLLPLPPPPFA), serve as a signal peptide directing secretion. The Ephrin RBD domain occupies 34–174 (SDRYAVYWNR…RLKVYVRPTN (141 aa)). N42 carries N-linked (GlcNAc...) asparagine glycosylation. 2 cysteine pairs are disulfide-bonded: C73–C114 and C102–C163. N-linked (GlcNAc...) asparagine glycans are attached at residues N174 and N188. N188 carries GPI-anchor amidated asparagine lipidation. A propeptide spans 189 to 213 (NSCSSPGGCRLFLSTIPVLWTLLGS) (removed in mature form).

Belongs to the ephrin family. Binds to the receptor tyrosine kinases EPHA3, EPHA4 and EPHA5. Interacts with EPHA8; activates EPHA8.

The protein resides in the cell membrane. In terms of biological role, cell surface GPI-bound ligand for Eph receptors, a family of receptor tyrosine kinases which are crucial for migration, repulsion and adhesion during neuronal, vascular and epithelial development. Binds promiscuously Eph receptors residing on adjacent cells, leading to contact-dependent bidirectional signaling into neighboring cells. The signaling pathway downstream of the receptor is referred to as forward signaling while the signaling pathway downstream of the ephrin ligand is referred to as reverse signaling. With the EPHA2 receptor may play a role in bone remodeling through regulation of osteoclastogenesis and osteoblastogenesis. The sequence is that of Ephrin-A2 (EFNA2) from Homo sapiens (Human).